The chain runs to 194 residues: E3 ubiquitin-protein ligase RNF4 (194 aa).

A compositionally biased stretch (basic residues) spans 1-12 (MSTRNPQRKRRG). Residues 1–20 (MSTRNPQRKRRGGAVNSRQT) form a required for ubiquitination activity region. The disordered stretch occupies residues 1 to 36 (MSTRNPQRKRRGGAVNSRQTQKRTRETTSTPEISLE). A mediates interaction with TRPS1 region spans residues 6 to 65 (PQRKRRGGAVNSRQTQKRTRETTSTPEISLEAEPIELVETVGDEIVDLTCESLEPVVVDL). Short sequence motifs (SUMO interaction motif) lie at residues 40 to 43 (IELV), 50 to 53 (IVDL), 61 to 63 (VVV), and 71 to 74 (VVIV). Phosphoserine occurs at positions 98 and 99. Zn(2+) is bound by residues C136, C139, C158, H160, C163, C166, C177, and C180. An RING-type zinc finger spans residues 136 to 181 (CPICMDGYSEIVQNGRLIVSTECGHVFCSQCLRDSLKNANTCPTCR).

Homodimer (via RING-type zinc finger domain). Interacts with GSC2. Interacts with AR/the androgen receptor and TBP. Interacts with TCF20. Interacts with PATZ1. Interacts with TRPS1; negatively regulates TRPS1 transcriptional repressor activity. Interacts with PML (isoform PML-1, isoform PML-2, isoform PML-3, isoform PML-4, isoform PML-5 and isoform PML-6). Interacts with PRDM1/Blimp-1. Post-translationally, sumoylated; conjugated by one or two SUMO1 moieties. Autoubiquitinated. Widely expressed with highest levels in testis.

Its subcellular location is the cytoplasm. The protein resides in the nucleus. It localises to the nucleoplasm. The protein localises to the PML body. The enzyme catalyses S-ubiquitinyl-[E2 ubiquitin-conjugating enzyme]-L-cysteine + [acceptor protein]-L-lysine = [E2 ubiquitin-conjugating enzyme]-L-cysteine + N(6)-ubiquitinyl-[acceptor protein]-L-lysine.. It participates in protein modification; protein ubiquitination. E3 ubiquitin-protein ligase which binds polysumoylated chains covalently attached to proteins and mediates 'Lys-6'-, 'Lys-11'-, 'Lys-48'- and 'Lys-63'-linked polyubiquitination of those substrates and their subsequent targeting to the proteasome for degradation. Regulates the degradation of several proteins including PML and the transcriptional activator PEA3. Involved in chromosome alignment and spindle assembly, it regulates the kinetochore CENPH-CENPI-CENPK complex by targeting polysumoylated CENPI to proteasomal degradation. Regulates the cellular responses to hypoxia and heat shock through degradation of respectively EPAS1 and PARP1. Alternatively, it may also bind DNA/nucleosomes and have a more direct role in the regulation of transcription for instance enhancing basal transcription and steroid receptor-mediated transcriptional activation. Catalyzes ubiquitination of sumoylated PARP1 in response to PARP1 trapping to chromatin, leading to PARP1 removal from chromatin by VCP/p97. This chain is E3 ubiquitin-protein ligase RNF4, found in Rattus norvegicus (Rat).